Here is a 244-residue protein sequence, read N- to C-terminus: Myosin-7 (244 aa).

The interval 1 to 244 (VEQTERSRKL…DIGTKGLNEE (244 aa)) is rodlike tail (S2 and LMM domains). Positions 1–244 (VEQTERSRKL…DIGTKGLNEE (244 aa)) form a coiled coil. The tract at residues 216–244 (EERADIAESQVNKLRAKSRDIGTKGLNEE) is disordered. Residues 232 to 244 (KSRDIGTKGLNEE) are compositionally biased toward basic and acidic residues.

In terms of assembly, muscle myosin is a hexameric protein that consists of 2 heavy chain subunits (MHC), 2 alkali light chain subunits (MLC) and 2 regulatory light chain subunits (MLC-2). Interacts with ECPAS. Interacts (via C-terminus) with LRRC39.

It localises to the cytoplasm. Its subcellular location is the myofibril. The protein resides in the sarcomere. Its function is as follows. Myosins are actin-based motor molecules with ATPase activity essential for muscle contraction. Forms regular bipolar thick filaments that, together with actin thin filaments, constitute the fundamental contractile unit of skeletal and cardiac muscle. The chain is Myosin-7 (MYH7) from Papio hamadryas (Hamadryas baboon).